The sequence spans 148 residues: Antitoxin Xre (148 aa).

This sequence belongs to the MbcA/ParS/Xre antitoxin family. In terms of assembly, homodimer. Forms a complex with cognate toxin Rse.

Functionally, antitoxin component of a type II toxin-antitoxin (TA) system. Neutralizes the NAD(+) depleting activity of cognate toxin Res. In Photorhabdus laumondii subsp. laumondii (strain DSM 15139 / CIP 105565 / TT01) (Photorhabdus luminescens subsp. laumondii), this protein is Antitoxin Xre.